Consider the following 282-residue polypeptide: Acetyl-coenzyme A carboxylase carboxyl transferase subunit beta (282 aa).

The CoA carboxyltransferase N-terminal domain occupies 29 to 282; the sequence is LPINCPSCSA…LSSLLGLHQG (254 aa). Cys33, Cys36, Cys52, and Cys55 together coordinate Zn(2+). The segment at 33 to 55 adopts a C4-type zinc-finger fold; the sequence is CPSCSARIAAEALQRNLKVCPKC.

Belongs to the AccD/PCCB family. In terms of assembly, acetyl-CoA carboxylase is a heterohexamer composed of biotin carboxyl carrier protein (AccB), biotin carboxylase (AccC) and two subunits each of ACCase subunit alpha (AccA) and ACCase subunit beta (AccD). Requires Zn(2+) as cofactor.

The protein localises to the cytoplasm. It catalyses the reaction N(6)-carboxybiotinyl-L-lysyl-[protein] + acetyl-CoA = N(6)-biotinyl-L-lysyl-[protein] + malonyl-CoA. It functions in the pathway lipid metabolism; malonyl-CoA biosynthesis; malonyl-CoA from acetyl-CoA: step 1/1. In terms of biological role, component of the acetyl coenzyme A carboxylase (ACC) complex. Biotin carboxylase (BC) catalyzes the carboxylation of biotin on its carrier protein (BCCP) and then the CO(2) group is transferred by the transcarboxylase to acetyl-CoA to form malonyl-CoA. The chain is Acetyl-coenzyme A carboxylase carboxyl transferase subunit beta from Syntrophomonas wolfei subsp. wolfei (strain DSM 2245B / Goettingen).